The chain runs to 241 residues: L-aspartate dehydrogenase (241 aa).

NAD(+) is bound by residues 10-11 (NI), Asp-28, 56-57 (AS), 63-64 (EY), 78-79 (IS), Ala-109, and Asn-164. Residue His-193 is part of the active site.

Belongs to the L-aspartate dehydrogenase family. In terms of assembly, homodimer.

It catalyses the reaction L-aspartate + NADP(+) + H2O = oxaloacetate + NH4(+) + NADPH + H(+). It carries out the reaction L-aspartate + NAD(+) + H2O = oxaloacetate + NH4(+) + NADH + H(+). It participates in cofactor biosynthesis; NAD(+) biosynthesis; iminoaspartate from L-aspartate (dehydrogenase route): step 1/1. Competitively inhibited by L-malate and NH(4)(+). Functionally, specifically catalyzes the NAD or NADP-dependent dehydrogenation of L-aspartate to iminoaspartate. Does not show aspartate oxidase activity. Is also able to catalyze the reverse reaction, i.e. the reductive amination of oxaloacetate. In Thermotoga maritima (strain ATCC 43589 / DSM 3109 / JCM 10099 / NBRC 100826 / MSB8), this protein is L-aspartate dehydrogenase.